A 909-amino-acid chain; its full sequence is Phosphoenolpyruvate carboxylase (909 aa).

Catalysis depends on residues H138 and K572.

Belongs to the PEPCase type 1 family. Requires Mg(2+) as cofactor.

It carries out the reaction oxaloacetate + phosphate = phosphoenolpyruvate + hydrogencarbonate. Forms oxaloacetate, a four-carbon dicarboxylic acid source for the tricarboxylic acid cycle. The protein is Phosphoenolpyruvate carboxylase of Lactobacillus delbrueckii subsp. bulgaricus (strain ATCC 11842 / DSM 20081 / BCRC 10696 / JCM 1002 / NBRC 13953 / NCIMB 11778 / NCTC 12712 / WDCM 00102 / Lb 14).